The chain runs to 694 residues: Beta-galactosidase (694 aa).

The segment at 1–31 (MGKRFPSGWFSPRVHPPRRQRSPMTNQATPG) is disordered. Positions 22–31 (SPMTNQATPG) are enriched in polar residues. The substrate site is built by arginine 144 and asparagine 182. Glutamate 183 (proton donor) is an active-site residue. Glutamate 341 serves as the catalytic Nucleophile. Substrate contacts are provided by residues tryptophan 349 and 389–392 (EKFH).

It belongs to the glycosyl hydrolase 42 family. In terms of assembly, homotrimer.

The catalysed reaction is Hydrolysis of terminal non-reducing beta-D-galactose residues in beta-D-galactosides.. Strongly inhibited by glucose. No activity is lost during treatment with 100 mM EDTA after 2 hours. Activity not considerably affected by metal ions (5 mM), including Na(+), K(+), Mg(2+), Co(2+) and Ca(2+). Completely inhibited by Cu(2+) and Zn(2+) (5 mM) and is strongly inhibited by Mn(2+) (11%), Fe(2+) (25%) and Ni(2+) (38%) in comparison with the activity in the absence of cations (100%). Activity not affected by dithiothreitol, beta-mercaptoethanol and L-cysteine whereas reduced glutathione almost completely inactivates it. With ONPG as substrate, the addition of ethanol up to 20% still slightly stimulates activity. The activity increases up to 120% in the presence of 8% v/v ethanol at pH 5.5. Its function is as follows. Hydrolyzes p-nitrophenyl-beta-D-galactopyranoside (PNPG), o-nitrophenyl-beta-D-galactopyranoside (ONPG) and chromogen 5-bromo-4-chloro-3-indolyl-beta-D-galactopyranoside (X-gal), with highest activity against PNPG. Also acts on p-nitrophenyl-beta-D-glucopyranoside (PNPGlu) and o-nitrophenyl-beta-D-glucopyranoside (ONPGlu), but with significantly lower activity. This chain is Beta-galactosidase, found in Arthrobacter sp.